A 268-amino-acid chain; its full sequence is tRNA threonylcarbamoyladenosine dehydratase (268 aa).

The chain crosses the membrane as a helical span at residues 237–257; sequence GFGAATMVTATFGFVAVSHAL.

This sequence belongs to the HesA/MoeB/ThiF family. Interacts with CsdE.

It is found in the membrane. Catalyzes the ATP-dependent dehydration of threonylcarbamoyladenosine at position 37 (t(6)A37) to form cyclic t(6)A37 (ct(6)A37) in tRNAs that read codons beginning with adenine. TcdA is also part of a sulfur transfer pathway; is able to accept sulfur from CsdA directly in vitro, but CsdE might act as the sulfur donor in vivo. The chain is tRNA threonylcarbamoyladenosine dehydratase (tcdA) from Escherichia coli (strain K12).